Consider the following 108-residue polypeptide: DNA-binding protein HBbu (108 aa).

This sequence belongs to the bacterial histone-like protein family.

Histone-like DNA-binding protein which is capable of wrapping DNA to stabilize it, and thus to prevent its denaturation under extreme environmental conditions. This is DNA-binding protein HBbu (hbb) from Borreliella afzelii (Borrelia afzelii).